The chain runs to 542 residues: Chaperonin GroEL 1 (542 aa).

ATP-binding positions include 29–32 (TLGP), 86–90 (DGTTT), glycine 413, 477–479 (NAA), and aspartate 493.

Belongs to the chaperonin (HSP60) family. Forms a cylinder of 14 subunits composed of two heptameric rings stacked back-to-back. Interacts with the co-chaperonin GroES.

The protein localises to the cytoplasm. It catalyses the reaction ATP + H2O + a folded polypeptide = ADP + phosphate + an unfolded polypeptide.. Functionally, together with its co-chaperonin GroES, plays an essential role in assisting protein folding. The GroEL-GroES system forms a nano-cage that allows encapsulation of the non-native substrate proteins and provides a physical environment optimized to promote and accelerate protein folding. The chain is Chaperonin GroEL 1 from Renibacterium salmoninarum (strain ATCC 33209 / DSM 20767 / JCM 11484 / NBRC 15589 / NCIMB 2235).